Reading from the N-terminus, the 200-residue chain is Probable molybdenum cofactor guanylyltransferase (200 aa).

GTP is bound by residues 9 to 11, lysine 21, aspartate 69, and aspartate 100; that span reads LAG. Aspartate 100 is a Mg(2+) binding site.

This sequence belongs to the MobA family. Mg(2+) is required as a cofactor.

It localises to the cytoplasm. It carries out the reaction Mo-molybdopterin + GTP + H(+) = Mo-molybdopterin guanine dinucleotide + diphosphate. Functionally, transfers a GMP moiety from GTP to Mo-molybdopterin (Mo-MPT) cofactor (Moco or molybdenum cofactor) to form Mo-molybdopterin guanine dinucleotide (Mo-MGD) cofactor. The polypeptide is Probable molybdenum cofactor guanylyltransferase (Bacillus cereus (strain G9842)).